The sequence spans 635 residues: Threonine--tRNA ligase (635 aa).

Positions 1-61 constitute a TGS domain; that stretch reads MINISLSDGS…ENNCKLRILT (61 aa). The tract at residues 242 to 533 is catalytic; sequence DHRKLGRELD…LIEEYAGCFP (292 aa). Cys-333, His-384, and His-510 together coordinate Zn(2+).

The protein belongs to the class-II aminoacyl-tRNA synthetase family. Homodimer. It depends on Zn(2+) as a cofactor.

The protein resides in the cytoplasm. The catalysed reaction is tRNA(Thr) + L-threonine + ATP = L-threonyl-tRNA(Thr) + AMP + diphosphate + H(+). In terms of biological role, catalyzes the attachment of threonine to tRNA(Thr) in a two-step reaction: L-threonine is first activated by ATP to form Thr-AMP and then transferred to the acceptor end of tRNA(Thr). Also edits incorrectly charged L-seryl-tRNA(Thr). This Rickettsia canadensis (strain McKiel) protein is Threonine--tRNA ligase.